We begin with the raw amino-acid sequence, 433 residues long: Chaperone SurA (433 aa).

The first 28 residues, 1-28, serve as a signal peptide directing secretion; that stretch reads MTAITRITLTGALLAAALLLAALQPARA. 2 consecutive PpiC domains span residues 174-277 and 286-386; these read NQEY…KLMD and VTET…QVTD.

It is found in the periplasm. The enzyme catalyses [protein]-peptidylproline (omega=180) = [protein]-peptidylproline (omega=0). Chaperone involved in the correct folding and assembly of outer membrane proteins. Recognizes specific patterns of aromatic residues and the orientation of their side chains, which are found more frequently in integral outer membrane proteins. May act in both early periplasmic and late outer membrane-associated steps of protein maturation. In Alkalilimnicola ehrlichii (strain ATCC BAA-1101 / DSM 17681 / MLHE-1), this protein is Chaperone SurA.